Reading from the N-terminus, the 796-residue chain is Histone acetyltransferase KAT2B (796 aa).

3 disordered regions span residues 1–32 (MSES…TECS), 77–97 (WKSQ…AEQP), and 371–408 (AGGG…DSKR). A compositionally biased stretch (low complexity) spans 10–24 (GSPAVGAAGSAPAAP). A compositionally biased stretch (pro residues) spans 81-94 (NPPPTPPPPTPPRA). Positions 392–408 (GEKRKPAEPLSHEDSKR) are enriched in basic and acidic residues. The region spanning 469–617 (LNQKPNKKIL…GATLMGCELN (149 aa)) is the N-acetyltransferase domain. Glu536 functions as the Proton donor/acceptor in the catalytic mechanism. Acetyl-CoA contacts are provided by residues 540 to 542 (CAV), 547 to 553 (QVKGYGT), and 578 to 581 (YAIG). The Bromo domain occupies 687–791 (KDPDQLYSTL…KFFYTKIKEA (105 aa)).

The protein belongs to the acetyltransferase family. GCN5 subfamily.

The protein localises to the nucleus. It localises to the cytoplasm. The protein resides in the cytoskeleton. It is found in the microtubule organizing center. Its subcellular location is the centrosome. The catalysed reaction is L-lysyl-[histone] + acetyl-CoA = N(6)-acetyl-L-lysyl-[histone] + CoA + H(+). It carries out the reaction L-lysyl-[protein] + acetyl-CoA = N(6)-acetyl-L-lysyl-[protein] + CoA + H(+). The enzyme catalyses spermidine + acetyl-CoA = N(8)-acetylspermidine + CoA + H(+). Functionally, functions as a histone acetyltransferase (HAT) to promote transcriptional activation. Has significant histone acetyltransferase activity with core histones (H3 and H4), and also with nucleosome core particles. Has a a strong preference for acetylation of H3 at 'Lys-9' (H3K9ac). Also acetylates non-histone proteins. Involved in heart and limb development by mediating acetylation of tbx5. Also acetylates spermidine. Together with kat2a, required for growth and differentiation of craniofacial cartilage and bone by regulating acetylation of histone H3 at 'Lys-9' (H3K9ac). This Danio rerio (Zebrafish) protein is Histone acetyltransferase KAT2B.